Reading from the N-terminus, the 1087-residue chain is Voltage-gated inwardly rectifying potassium channel KCNH3 (1087 aa).

The Cytoplasmic segment spans residues 1-228; sequence MPAMRGLLAP…HCGALRATWD (228 aa). The 73-residue stretch at 18–90 folds into the PAS domain; it reads IATRFDGTHS…QQIRKALDEH (73 aa). Residues 93–145 form the PAC domain; it reads FKAELILYRKSGLPFWCLLDVIPIKNEKGEVALFLVSHKDISETKNRGGPDNW. Residues 137 to 150 show a composition bias toward basic and acidic residues; that stretch reads KNRGGPDNWKERGG. Positions 137 to 161 are disordered; the sequence is KNRGGPDNWKERGGGRRRYGRAGSK. The chain crosses the membrane as a helical span at residues 229 to 249; sequence GFILLATLYVAVTVPYSVCVS. Over 250–259 the chain is Extracellular; it reads TAREPSAARG. A helical membrane pass occupies residues 260 to 280; it reads PPSVCDLAVEVLFILDIVLNF. The Cytoplasmic portion of the chain corresponds to 281–302; it reads RTTFVSKSGQVVFAPKSICLHY. The helical transmembrane segment at 303-323 threads the bilayer; sequence VTTWFLLDVIAALPFDLLHAF. Topologically, residues 324 to 331 are extracellular; the sequence is KVNVYVGA. The helical; Voltage-sensor transmembrane segment at 332-352 threads the bilayer; sequence HLLKTVRLLRLLRLLPRLDRY. Topologically, residues 353-361 are cytoplasmic; that stretch reads SQYSAVVLT. The chain crosses the membrane as a helical span at residues 362–382; that stretch reads LLMAVFALLAHWVACVWFYIG. Topologically, residues 383 to 456 are extracellular; it reads QQEIENSESE…GGPSLRSAYI (74 aa). The segment at 416–436 is disordered; the sequence is SPDGGNSSGQSENCSSSGGGS. A compositionally biased stretch (low complexity) spans 419–431; the sequence is GGNSSGQSENCSS. N-linked (GlcNAc...) asparagine glycans are attached at residues Asn-421, Asn-428, and Asn-439. The segment at residues 457 to 477 is an intramembrane region (pore-forming); that stretch reads TSLYFALSSLTSVGFGNVSAN. The Selectivity filter signature appears at 468–473; that stretch reads SVGFGN. Topologically, residues 478–482 are extracellular; that stretch reads TDTEK. A helical transmembrane segment spans residues 483–503; that stretch reads IFSICTMLIGALMHAVVFGNV. Over 504-1087 the chain is Cytoplasmic; the sequence is TAIIQRMYAR…QWTQEEGTGV (584 aa). 585–700 serves as a coordination point for a nucleoside 3',5'-cyclic phosphate; that stretch reads LFEAASRGCL…FAPRFSRGLR (116 aa). Disordered stretches follow at residues 733–813 and 975–1061; these read EKET…LQLP and LMAP…PWDP. The span at 776–788 shows a compositional bias: basic residues; that stretch reads TAPRPRLGGRGRP.

Belongs to the potassium channel family. H (Eag) (TC 1.A.1.20) subfamily. Kv12.2/KCNH3 sub-subfamily. As to quaternary structure, the potassium channel is probably composed of a homo- or heterotetrameric complex of pore-forming alpha subunits that can associate with modulating beta subunits. Interacts with KCNE1 and KCNE3; these interactions regulate KCNH3 trafficking to the plasma membrane and its subsequent voltage-gated potassium channel activity. Post-translationally, N-glycosylated. N-glycosylation mediates traffick to the cell membrane but is not necessary for voltage-gated potassium channel activity. Highly expressed in adult and embryonic brain, in particular in cerebellum, brain stem, hippocampus, cortex and striatum. Also found in pituitary.

The protein localises to the cell membrane. It catalyses the reaction K(+)(in) = K(+)(out). Pore-forming (alpha) subunit of a voltage-gated inwardly rectifying potassium channel. Charactherized by a fast rate of activation during depolarization followed by a rapid inactivation at much more depolarized value causing inward rectification due to a C-type inactivation mechanism. Exhibits a rapid recovery from inactivation. This is Voltage-gated inwardly rectifying potassium channel KCNH3 from Rattus norvegicus (Rat).